The primary structure comprises 682 residues: Potassium-transporting ATPase ATP-binding subunit (682 aa).

4 helical membrane passes run 34–54 (PVMF…LAMV), 58–78 (IAGS…TVLF), 219–239 (IALT…TATL), and 254–274 (VLVA…LSAI). The active-site 4-aspartylphosphate intermediate is the aspartate 307. ATP-binding positions include aspartate 344, glutamate 348, 377 to 384 (FTAQSRMS), and lysine 395. Mg(2+)-binding residues include aspartate 518 and aspartate 522. Transmembrane regions (helical) follow at residues 588-608 (FAII…LNVM), 616-636 (AILS…PLAL), and 662-682 (LVVP…LGLA).

Belongs to the cation transport ATPase (P-type) (TC 3.A.3) family. Type IA subfamily. As to quaternary structure, the system is composed of three essential subunits: KdpA, KdpB and KdpC.

It is found in the cell inner membrane. The enzyme catalyses K(+)(out) + ATP + H2O = K(+)(in) + ADP + phosphate + H(+). In terms of biological role, part of the high-affinity ATP-driven potassium transport (or Kdp) system, which catalyzes the hydrolysis of ATP coupled with the electrogenic transport of potassium into the cytoplasm. This subunit is responsible for energy coupling to the transport system and for the release of the potassium ions to the cytoplasm. The chain is Potassium-transporting ATPase ATP-binding subunit from Salmonella choleraesuis (strain SC-B67).